The sequence spans 179 residues: ATP synthase subunit delta (179 aa).

This sequence belongs to the ATPase delta chain family. F-type ATPases have 2 components, F(1) - the catalytic core - and F(0) - the membrane proton channel. F(1) has five subunits: alpha(3), beta(3), gamma(1), delta(1), epsilon(1). F(0) has three main subunits: a(1), b(2) and c(10-14). The alpha and beta chains form an alternating ring which encloses part of the gamma chain. F(1) is attached to F(0) by a central stalk formed by the gamma and epsilon chains, while a peripheral stalk is formed by the delta and b chains.

It localises to the cell membrane. Its function is as follows. F(1)F(0) ATP synthase produces ATP from ADP in the presence of a proton or sodium gradient. F-type ATPases consist of two structural domains, F(1) containing the extramembraneous catalytic core and F(0) containing the membrane proton channel, linked together by a central stalk and a peripheral stalk. During catalysis, ATP synthesis in the catalytic domain of F(1) is coupled via a rotary mechanism of the central stalk subunits to proton translocation. This protein is part of the stalk that links CF(0) to CF(1). It either transmits conformational changes from CF(0) to CF(1) or is implicated in proton conduction. The sequence is that of ATP synthase subunit delta from Clostridium beijerinckii (strain ATCC 51743 / NCIMB 8052) (Clostridium acetobutylicum).